The primary structure comprises 158 residues: Transcription elongation factor GreA (158 aa).

Residues 47–74 (AEYHAAKEEQSHNEGRINELEDKLARAD) are a coiled coil.

This sequence belongs to the GreA/GreB family.

Its function is as follows. Necessary for efficient RNA polymerase transcription elongation past template-encoded arresting sites. The arresting sites in DNA have the property of trapping a certain fraction of elongating RNA polymerases that pass through, resulting in locked ternary complexes. Cleavage of the nascent transcript by cleavage factors such as GreA or GreB allows the resumption of elongation from the new 3'terminus. GreA releases sequences of 2 to 3 nucleotides. The protein is Transcription elongation factor GreA of Rhodopseudomonas palustris (strain ATCC BAA-98 / CGA009).